The following is a 557-amino-acid chain: DNA ligase (557 aa).

Residue glutamate 251 participates in ATP binding. The active-site N6-AMP-lysine intermediate is the lysine 253. Arginine 258, arginine 273, glutamate 303, phenylalanine 342, arginine 418, and lysine 424 together coordinate ATP.

This sequence belongs to the ATP-dependent DNA ligase family. The cofactor is Mg(2+).

The catalysed reaction is ATP + (deoxyribonucleotide)n-3'-hydroxyl + 5'-phospho-(deoxyribonucleotide)m = (deoxyribonucleotide)n+m + AMP + diphosphate.. Its function is as follows. DNA ligase that seals nicks in double-stranded DNA during DNA replication, DNA recombination and DNA repair. This is DNA ligase from Methanosphaera stadtmanae (strain ATCC 43021 / DSM 3091 / JCM 11832 / MCB-3).